The following is a 471-amino-acid chain: Ribulose bisphosphate carboxylase large chain (471 aa).

Lysine 5 carries the N6,N6,N6-trimethyllysine modification. Residues asparagine 114 and threonine 164 each contribute to the substrate site. Lysine 166 functions as the Proton acceptor in the catalytic mechanism. Lysine 168 lines the substrate pocket. Mg(2+) is bound by residues lysine 192, aspartate 194, and glutamate 195. An N6-carboxylysine modification is found at lysine 192. Residue histidine 285 is the Proton acceptor of the active site. Positions 286, 318, and 370 each coordinate substrate.

This sequence belongs to the RuBisCO large chain family. Type I subfamily. In terms of assembly, heterohexadecamer of 8 large chains and 8 small chains; disulfide-linked. The disulfide link is formed within the large subunit homodimers. Mg(2+) is required as a cofactor. The disulfide bond which can form in the large chain dimeric partners within the hexadecamer appears to be associated with oxidative stress and protein turnover.

It is found in the plastid. Its subcellular location is the chloroplast. It catalyses the reaction 2 (2R)-3-phosphoglycerate + 2 H(+) = D-ribulose 1,5-bisphosphate + CO2 + H2O. The catalysed reaction is D-ribulose 1,5-bisphosphate + O2 = 2-phosphoglycolate + (2R)-3-phosphoglycerate + 2 H(+). RuBisCO catalyzes two reactions: the carboxylation of D-ribulose 1,5-bisphosphate, the primary event in carbon dioxide fixation, as well as the oxidative fragmentation of the pentose substrate in the photorespiration process. Both reactions occur simultaneously and in competition at the same active site. This is Ribulose bisphosphate carboxylase large chain from Deppea grandiflora.